The sequence spans 549 residues: Guanine nucleotide-binding protein-like 3 (549 aa).

Over residues 1-45 the composition is skewed to basic residues; the sequence is MKRPKLKKASKRMTCHKRYKIQKKVREHHRKLRKEAKKRGHKKPR. Disordered regions lie at residues 1 to 56 and 73 to 104; these read MKRP…SAPF and ELKQQQKLDRQKELEKKRKLETNPDIKPSNVE. The segment at 2 to 46 is basic; that stretch reads KRPKLKKASKRMTCHKRYKIQKKVREHHRKLRKEAKKRGHKKPRK. Residues 56 to 95 are a coiled coil; sequence FKEALLREAELRKQRLEELKQQQKLDRQKELEKKRKLETN. Residues 73-96 show a composition bias toward basic and acidic residues; it reads ELKQQQKLDRQKELEKKRKLETNP. K79 bears the N6-acetyllysine mark. Residues K91 and K99 each participate in a glycyl lysine isopeptide (Lys-Gly) (interchain with G-Cter in SUMO2) cross-link. S101 is subject to Phosphoserine. Glycyl lysine isopeptide (Lys-Gly) (interchain with G-Cter in SUMO2) cross-links involve residues K114, K179, K196, K253, K267, and K275. One can recognise a CP-type G domain in the interval 131-312; that stretch reads CQELKKVIEA…IIDSPSFIVS (182 aa). Residue 178 to 181 coordinates GTP; that stretch reads NKSD. Residue 261 to 268 coordinates GTP; sequence GFPNVGKS. The tract at residues 282–456 is intermediate; it reads VGVSMGLTRS…HLANSILFQS (175 aa). Residue 305 to 308 participates in GTP binding; that stretch reads DSPS. Residues 465–543 are acidic; sequence EEKDIHEELP…KIIEEDDAYD (79 aa). The span at 474 to 483 shows a compositional bias: basic and acidic residues; it reads PKRKERKQEE. Residues 474-532 are disordered; that stretch reads PKRKERKQEEREDDKDSDQETVDEEVDENSSGMFAAEETGEALSEETTAGEQSTRSFIL. The segment covering 484 to 501 has biased composition (acidic residues); sequence REDDKDSDQETVDEEVDE. Residues S490, S504, S517, and S529 each carry the phosphoserine modification. Residues 518-529 show a composition bias toward polar residues; it reads EETTAGEQSTRS.

Belongs to the TRAFAC class YlqF/YawG GTPase family. In terms of assembly, interacts with MDM2; this interaction stabilizes MDM2. Interaction with MDM2 occurs in the nucleoplasm and is triggered by a nucleolar release mechanism, such as mitosis-induced nucleolar disassembly. Indirectly interacts with TP53, via MDM2-binding. Interacts with TSC22D1 isoform 2. As to expression, increased levels in lung tissue in cancer patients.

The protein localises to the nucleus. It is found in the nucleolus. May be required to maintain the proliferative capacity of stem cells. Stabilizes MDM2 by preventing its ubiquitination, and hence proteasomal degradation. The protein is Guanine nucleotide-binding protein-like 3 (GNL3) of Homo sapiens (Human).